A 193-amino-acid polypeptide reads, in one-letter code: MIYGSLDHGFIEVIVGPMFSGKSEELIRRIRRAQIAKQKVQVFKPAIDDRYSIDKVVSHNGSSINAISVTKASEILDLLEEDTQVVAIDEIQFFDHSLVDVVREIADMGKRVICAGLDMDFRGEPFGVTPDIMAIAESVDKLTAICVKCGNPATRTQRLINGKPAKYDDPIILVGAHETYEARCRKCHEVPRT.

ATP-binding positions include glycine 16–serine 23 and aspartate 89–glutamine 92. Glutamate 90 serves as the catalytic Proton acceptor. Residues cysteine 146, cysteine 149, cysteine 184, and cysteine 187 each contribute to the Zn(2+) site.

It belongs to the thymidine kinase family. As to quaternary structure, homotetramer.

It is found in the cytoplasm. The enzyme catalyses thymidine + ATP = dTMP + ADP + H(+). The polypeptide is Thymidine kinase (Caldanaerobacter subterraneus subsp. tengcongensis (strain DSM 15242 / JCM 11007 / NBRC 100824 / MB4) (Thermoanaerobacter tengcongensis)).